Reading from the N-terminus, the 1023-residue chain is Sodium/potassium-transporting ATPase subunit alpha-1 (1023 aa).

The propeptide occupies 1–5 (MGLGK). Over residues 1–11 (MGLGKGKDEYK) the composition is skewed to basic and acidic residues. The segment at 1 to 33 (MGLGKGKDEYKLAATSEDGGKKDKKAKAKKDMD) is disordered. Topologically, residues 6 to 87 (GKDEYKLAAT…NALTPPPTTP (82 aa)) are cytoplasmic. The residue at position 16 (S16) is a Phosphoserine; by PKC. The interaction with phosphoinositide-3 kinase stretch occupies residues 82–84 (PPP). A helical membrane pass occupies residues 88 to 108 (EWVKFCKQLFGGFSMLLWIGA). At 109–131 (ILCFLAYGIQAASEDEPANDNLY) the chain is on the extracellular side. Residues 132–152 (LGIVLSAVVIITGCFSYYQEA) form a helical membrane-spanning segment. The Cytoplasmic segment spans residues 153 to 288 (KSSKIMESFK…GGKTPIAIEI (136 aa)). Residues 216–237 (SSLTGESEPQTRSPDFSNENPL) form a disordered region. The helical transmembrane segment at 289 to 308 (EHFIHIITGVAVFLGVSFFI) threads the bilayer. Residues 309–320 (LSLILGYNWLEA) are Extracellular-facing. Residues 321–338 (VIFLIGIIVANVPEGLLA) form a helical membrane-spanning segment. Over 339 to 772 (TVTVCLTLTA…EEGRLIFDNL (434 aa)) the chain is Cytoplasmic. Residue D376 is the 4-aspartylphosphate intermediate of the active site. K487 provides a ligand contact to ATP. Positions 717 and 721 each coordinate Mg(2+). The helical transmembrane segment at 773–792 (KKSIAYTLTSNIPEISPFLL) threads the bilayer. Residues 793–802 (FIIANIPLPL) are Extracellular-facing. The chain crosses the membrane as a helical span at residues 803–823 (GTVTILCIDLGTDMVPAISLA). Topologically, residues 824–843 (YEKAESDIMKRQPRNPKTDK) are cytoplasmic. Residues 844–866 (LVNERLISIAYGQIGMMQATAGF) traverse the membrane as a helical segment. Over 867–918 (FTYFVILAENGFLPMDLIGVRVLWDDKYVNDLEDSYGQQWTYERRKIVEYSC) the chain is Extracellular. Residues 919–938 (HTAFFASIVIVQWADLIICK) traverse the membrane as a helical segment. Topologically, residues 939–951 (TRRNSIVQQGMTN) are cytoplasmic. Position 943 is a phosphoserine; by PKA (S943). The chain crosses the membrane as a helical span at residues 952 to 970 (RILIFGLFEETALAAFLSY). Residues 971 to 985 (CPGMDVALRMYPMKP) are Extracellular-facing. The helical transmembrane segment at 986-1006 (LWWFCAFPYSLLIFLYDEARR) threads the bilayer. The Cytoplasmic segment spans residues 1007 to 1023 (YILRRNPGGWVEKETYY).

Belongs to the cation transport ATPase (P-type) (TC 3.A.3) family. Type IIC subfamily. The sodium/potassium-transporting ATPase is composed of a catalytic alpha subunit, an auxiliary non-catalytic beta subunit and an additional regulatory subunit.

The protein localises to the cell membrane. It localises to the sarcolemma. It carries out the reaction K(+)(out) + Na(+)(in) + ATP + H2O = K(+)(in) + Na(+)(out) + ADP + phosphate + H(+). Its function is as follows. This is the catalytic component of the active enzyme, which catalyzes the hydrolysis of ATP coupled with the exchange of sodium and potassium ions across the plasma membrane. This action creates the electrochemical gradient of sodium and potassium ions, providing the energy for active transport of various nutrients. The protein is Sodium/potassium-transporting ATPase subunit alpha-1 (atp1a1) of Oreochromis mossambicus (Mozambique tilapia).